Consider the following 465-residue polypeptide: CUGBP Elav-like family member 3 (465 aa).

RRM domains lie at 7–88 (IKLF…PADS) and 95–175 (RKLF…FADT). Residues 346 to 359 (PPALVAQQPPPPPQ) show a composition bias toward pro residues. The disordered stretch occupies residues 346-379 (PPALVAQQPPPPPQQQQQQQQQQQQQQQREGPDG). A compositionally biased stretch (low complexity) spans 360–373 (QQQQQQQQQQQQQQ). The region spanning 380–458 (CNIFIYHLPQ…KRLKVQLKRP (79 aa)) is the RRM 3 domain.

The protein belongs to the CELF/BRUNOL family. In terms of tissue distribution, expressed in brain.

Its subcellular location is the nucleus. The protein resides in the cytoplasm. RNA-binding protein involved in the regulation of pre-mRNA alternative splicing. Mediates exon inclusion and/or exclusion in pre-mRNA that are subject to tissue-specific and developmentally regulated alternative splicing. Specifically activates exon 5 inclusion of cardiac isoforms of TNNT2 during heart remodeling at the juvenile to adult transition. Activates the splicing of MAPT/Tau exon 10. Binds to muscle-specific splicing enhancer (MSE) intronic sites flanking the alternative exon 5 of TNNT2 pre-mRNA. The sequence is that of CUGBP Elav-like family member 3 (CELF3) from Homo sapiens (Human).